The following is a 727-amino-acid chain: Pollen-specific leucine-rich repeat extensin-like protein 3 (727 aa).

Residues methionine 1 to alanine 22 form the signal peptide. An LRR 1 repeat occupies leucine 19–aspartate 43. N-linked (GlcNAc...) asparagine glycosylation is present at asparagine 80. 9 LRR repeats span residues valine 107–methionine 131, threonine 132–lysine 154, serine 156–tryptophan 179, proline 180–lysine 202, lysine 203–serine 226, alanine 228–methionine 249, lysine 250–leucine 273, asparagine 275–glycine 296, and leucine 297–leucine 321. An N-linked (GlcNAc...) asparagine glycan is attached at asparagine 326. A disordered region spans residues serine 381–tyrosine 727. Composition is skewed to pro residues over residues serine 397–asparagine 419, serine 446–proline 457, valine 466–asparagine 479, serine 492–serine 677, and serine 718–tyrosine 727. Positions serine 432–tyrosine 727 are contains the Ser-Pro(4) repeats.

Post-translationally, hydroxylated on proline residues in the S-P-P-P-P repeat. In terms of processing, O-glycosylated on hydroxyprolines. In terms of tissue distribution, expressed in flowers, stamen, pollen, and pollinated carpels.

It is found in the secreted. The protein resides in the cell wall. Functionally, modulates cell morphogenesis by regulating cell wall formation and assembly, and/or growth polarization. The polypeptide is Pollen-specific leucine-rich repeat extensin-like protein 3 (PEX3) (Arabidopsis thaliana (Mouse-ear cress)).